The primary structure comprises 429 residues: UPF0053 protein YugS (429 aa).

Transmembrane regions (helical) follow at residues 1 to 21, 61 to 81, 101 to 121, and 133 to 153; these read MLIL…VFVA, ACQL…EPTF, IVTF…MGEL, and AVSL…YPFI. A CNNM transmembrane domain is found at 1 to 201; sequence MLILQLIAIF…YEKGEINQSE (201 aa). 2 CBS domains span residues 220 to 281 and 284 to 341; these read MIPR…PIKL and IMRP…IRDE.

Belongs to the UPF0053 family.

It is found in the cell membrane. In Bacillus subtilis (strain 168), this protein is UPF0053 protein YugS (yugS).